A 337-amino-acid chain; its full sequence is Protein-glutamate methylesterase/protein-glutamine glutaminase of group 3 operon (337 aa).

The 118-residue stretch at 2–119 (KIAIVNDMPL…GDAREAAAPL (118 aa)) folds into the Response regulatory domain. Position 53 is a 4-aspartylphosphate (Asp-53). The CheB-type methylesterase domain maps to 144-337 (PLREASQRRG…AGRLTEFFAK (194 aa)). Catalysis depends on residues Ser-160, His-187, and Asp-280.

Belongs to the CheB family. In terms of processing, phosphorylated by CheA. Phosphorylation of the N-terminal regulatory domain activates the methylesterase activity.

The protein resides in the cytoplasm. It catalyses the reaction [protein]-L-glutamate 5-O-methyl ester + H2O = L-glutamyl-[protein] + methanol + H(+). The catalysed reaction is L-glutaminyl-[protein] + H2O = L-glutamyl-[protein] + NH4(+). Its function is as follows. Involved in chemotaxis. Part of a chemotaxis signal transduction system that modulates chemotaxis in response to various stimuli. Catalyzes the demethylation of specific methylglutamate residues introduced into the chemoreceptors (methyl-accepting chemotaxis proteins or MCP) by CheR. Also mediates the irreversible deamidation of specific glutamine residues to glutamic acid. The polypeptide is Protein-glutamate methylesterase/protein-glutamine glutaminase of group 3 operon (Pseudomonas putida (strain ATCC 47054 / DSM 6125 / CFBP 8728 / NCIMB 11950 / KT2440)).